Consider the following 639-residue polypeptide: Zinc finger protein ZIC 5 (639 aa).

4 disordered regions span residues 113–171 (PCGG…GHSR), 189–251 (HGAP…GHPH), 323–355 (PGPH…HLPG), and 379–409 (PDEL…PCSK). Residues 124–150 (SAPPPPAPPLPPTPSPPPPPPPPPPPA) show a composition bias toward pro residues. Pro residues-rich tracts occupy residues 331-343 (APPP…PAPA) and 385-401 (LPPP…PPPA). Residues 434 to 461 (HVCFWEDCPREGKPFKAKYKLINHIRVH) form a C2H2-type 1; atypical zinc finger. C2H2-type zinc fingers lie at residues 467-491 (FPCP…KRTH), 497-521 (FKCE…SHVH), and 527-551 (YYCK…MKIH). Residues 548-568 (MKIHCKSPPPSPGPLGYSSVG) form a disordered region. Residues serine 554, serine 558, and serine 576 each carry the phosphoserine modification. The tract at residues 607–639 (APSHLHTPSSNGTTSETEDEEIYGNPEVVRTIH) is disordered. The span at 612–621 (HTPSSNGTTS) shows a compositional bias: polar residues.

The protein belongs to the GLI C2H2-type zinc-finger protein family.

It localises to the nucleus. Functionally, essential for neural crest development, converting cells from an epidermal fate to a neural crest cell fate. Binds to DNA. This Homo sapiens (Human) protein is Zinc finger protein ZIC 5 (ZIC5).